The chain runs to 235 residues: Small ribosomal subunit protein uS5 (235 aa).

Residues 60-123 (ENQEVLDIAL…NYAKMNIIEI (64 aa)) enclose the S5 DRBM domain. Residues Cys-127, Cys-132, Cys-134, and His-138 each contribute to the Zn(2+) site.

Belongs to the universal ribosomal protein uS5 family. Part of the 30S ribosomal subunit. Contacts protein S4. It depends on Zn(2+) as a cofactor.

Functionally, with S4 and S12 plays an important role in translational accuracy. In Thermococcus kodakarensis (strain ATCC BAA-918 / JCM 12380 / KOD1) (Pyrococcus kodakaraensis (strain KOD1)), this protein is Small ribosomal subunit protein uS5.